The chain runs to 354 residues: Ornithine transcarbamylase, mitochondrial (354 aa).

The N-terminal 32 residues, 1-32 (MLSNLRILLNNAALRKGHTSVVRHFWCGKPVQ), are a transit peptide targeting the mitochondrion. Lys-70 carries the N6-acetyllysine; alternate modification. Residue Lys-70 is modified to N6-succinyllysine; alternate. At Lys-80 the chain carries N6-succinyllysine. Lys-88 is subject to N6-acetyllysine; alternate. The residue at position 88 (Lys-88) is an N6-succinyllysine; alternate. 90–94 (STRTR) is a binding site for carbamoyl phosphate. A Phosphoserine modification is found at Ser-133. Arg-141 contacts carbamoyl phosphate. Arg-141 is an L-ornithine binding site. Lys-144 is subject to N6-acetyllysine; alternate. Position 144 is an N6-succinyllysine; alternate (Lys-144). His-168 contacts carbamoyl phosphate. Asn-199 lines the L-ornithine pocket. Lys-221, Lys-231, and Lys-238 each carry N6-acetyllysine; alternate. 3 positions are modified to N6-succinyllysine; alternate: Lys-221, Lys-231, and Lys-238. An N6-acetyllysine modification is found at Lys-243. Residue 263 to 267 (DTWIS) participates in L-ornithine binding. Lys-274 and Lys-289 each carry N6-succinyllysine. Lys-292 is subject to N6-acetyllysine; alternate. An N6-succinyllysine; alternate modification is found at Lys-292. 302 to 305 (HCLP) contacts L-ornithine. The active site involves Cys-303. The residue at position 307 (Lys-307) is an N6-acetyllysine; alternate. Lys-307 carries the post-translational modification N6-succinyllysine; alternate. Arg-330 contributes to the carbamoyl phosphate binding site. Residue Arg-330 coordinates L-ornithine.

It belongs to the aspartate/ornithine carbamoyltransferase superfamily. OTCase family. As to quaternary structure, homotrimer. Acetylation at Lys-88 negatively regulates ornithine carbamoyltransferase activity in response to nutrient signals.

Its subcellular location is the mitochondrion matrix. The enzyme catalyses carbamoyl phosphate + L-ornithine = L-citrulline + phosphate + H(+). Its pathway is nitrogen metabolism; urea cycle; L-citrulline from L-ornithine and carbamoyl phosphate: step 1/1. Its activity is regulated as follows. Negatively regulated by lysine acetylation. Catalyzes the second step of the urea cycle, the condensation of carbamoyl phosphate with L-ornithine to form L-citrulline. The urea cycle ensures the detoxification of ammonia by converting it to urea for excretion. In Mus musculus (Mouse), this protein is Ornithine transcarbamylase, mitochondrial.